The following is a 204-amino-acid chain: Large ribosomal subunit protein eL15 (204 aa).

It belongs to the eukaryotic ribosomal protein eL15 family. In terms of assembly, component of the large ribosomal subunit.

It is found in the cytoplasm. In terms of biological role, component of the large ribosomal subunit. The ribosome is a large ribonucleoprotein complex responsible for the synthesis of proteins in the cell. The sequence is that of Large ribosomal subunit protein eL15 (rpl15) from Hypophthalmichthys nobilis (Bighead carp).